A 641-amino-acid polypeptide reads, in one-letter code: Threonine--tRNA ligase (641 aa).

Residues 1–61 (MIKISFFDNQ…KKNGNLEILT (61 aa)) form the TGS domain. The catalytic stretch occupies residues 240-538 (DHKKINKELD…LVEETKGVFP (299 aa)). Positions 334, 385, and 515 each coordinate Zn(2+).

It belongs to the class-II aminoacyl-tRNA synthetase family. As to quaternary structure, homodimer. Requires Zn(2+) as cofactor.

The protein localises to the cytoplasm. The catalysed reaction is tRNA(Thr) + L-threonine + ATP = L-threonyl-tRNA(Thr) + AMP + diphosphate + H(+). Functionally, catalyzes the attachment of threonine to tRNA(Thr) in a two-step reaction: L-threonine is first activated by ATP to form Thr-AMP and then transferred to the acceptor end of tRNA(Thr). Also edits incorrectly charged L-seryl-tRNA(Thr). This chain is Threonine--tRNA ligase, found in Aster yellows witches'-broom phytoplasma (strain AYWB).